We begin with the raw amino-acid sequence, 180 residues long: MLSVILLAIALAMDAFSISITKGFTQKKIQKQEILWYGIFFGGFQCFMPIIGYVCGTTIRSFISTYAPWIAFILLLCIGLNMIRESITSSDEKVADIFSFKEVTLLAIATSIDAFAVGVTFAILNISLVIPCAIIGIITFLFSIVGIFIGKKLGDYFGDKFQILGGVILILLGFKILLGF.

The next 6 helical transmembrane spans lie at 1-21, 34-54, 63-83, 103-123, 129-149, and 160-180; these read MLSV…ISIT, ILWY…IGYV, ISTY…LNMI, VTLL…TFAI, VIPC…GIFI, and KFQI…LLGF.

The protein belongs to the MntP (TC 9.B.29) family.

It localises to the cell membrane. Functionally, probably functions as a manganese efflux pump. This chain is Putative manganese efflux pump MntP, found in Methanosphaera stadtmanae (strain ATCC 43021 / DSM 3091 / JCM 11832 / MCB-3).